The sequence spans 626 residues: ATP-dependent RNA helicase cyt-19, mitochondrial (626 aa).

A Q motif motif is present at residues alanine 74–serine 103. Residues isoleucine 106–glutamate 297 enclose the Helicase ATP-binding domain. Alanine 119 to threonine 126 contacts ATP. Positions aspartate 241–aspartate 244 match the DEAD box motif. Residues alanine 329–glycine 493 form the Helicase C-terminal domain. The segment at leucine 569–phenylalanine 626 is disordered. The tract at residues methionine 578–phenylalanine 626 is RNA-binding. Positions alanine 607–arginine 617 are enriched in basic and acidic residues.

It belongs to the DEAD box helicase family.

The protein localises to the mitochondrion matrix. The enzyme catalyses ATP + H2O = ADP + phosphate + H(+). With respect to regulation, activated by exposed helices in a group I intron RNA. Functionally, acts as an RNA chaperone to resolve non-native structures formed during RNA folding to promote mitochondrial group I, but also group II, intron splicing. Functions predominantly by disrupting accessible RNA secondary structure and depends on spontaneous openings in tightly packed RNAs to gain access to RNA helices. The chain is ATP-dependent RNA helicase cyt-19, mitochondrial from Neurospora crassa (strain ATCC 24698 / 74-OR23-1A / CBS 708.71 / DSM 1257 / FGSC 987).